The following is a 295-amino-acid chain: Protoheme IX farnesyltransferase (295 aa).

9 consecutive transmembrane segments (helical) span residues 8–28, 35–55, 84–104, 107–127, 132–152, 162–182, 208–228, 233–253, and 264–284; these read VTKP…FLLA, YPLF…GCVF, ASLV…WFGA, LACW…SLYM, VYGT…GYCA, AILL…IAIF, ITLY…GGYA, LVVA…GYKV, and FVFS…DFMV.

Belongs to the UbiA prenyltransferase family. Protoheme IX farnesyltransferase subfamily.

Its subcellular location is the cell inner membrane. It catalyses the reaction heme b + (2E,6E)-farnesyl diphosphate + H2O = Fe(II)-heme o + diphosphate. It functions in the pathway porphyrin-containing compound metabolism; heme O biosynthesis; heme O from protoheme: step 1/1. In terms of biological role, converts heme B (protoheme IX) to heme O by substitution of the vinyl group on carbon 2 of heme B porphyrin ring with a hydroxyethyl farnesyl side group. The polypeptide is Protoheme IX farnesyltransferase (Klebsiella pneumoniae subsp. pneumoniae (strain ATCC 700721 / MGH 78578)).